A 47-amino-acid chain; its full sequence is Large ribosomal subunit protein bL27c-2 (47 aa).

Belongs to the bacterial ribosomal protein bL27 family.

It is found in the plastid. The protein localises to the chloroplast. This Cyanidium caldarium (Red alga) protein is Large ribosomal subunit protein bL27c-2.